Consider the following 404-residue polypeptide: Schlafen-like protein 1 (404 aa).

Disordered stretches follow at residues 1-31 (MTPM…LPTE) and 139-170 (GPLS…AWPT). Residues 7 to 16 (SVQTQVSEPF) are compositionally biased toward polar residues. Residues 152 to 165 (GLSPGPNPGSGVPL) are compositionally biased toward low complexity. 258–265 (GVEDSGLV) serves as a coordination point for ATP. A coiled-coil region spans residues 365 to 395 (RWLVELGKLEERVKVLTMEKEQLQQQLQQHG).

It belongs to the Schlafen family. Subgroup I subfamily.

This Macaca fascicularis (Crab-eating macaque) protein is Schlafen-like protein 1 (SLFNL1).